Consider the following 574-residue polypeptide: MYIRRLNDQTANQIAAGEVVERPASVVKELIENSIDAHASCIRVDILQGGAKQIRIQDDGDGIHPEDLVLALERHATSKIAKIDDLQDITTLGFRGEALASISAVSRLTLTSRQKNAEMGYRISNISHKIMTPVPAAHPQGTTIDVQDLFYNTPARRKFLRSPATEFQHIRRIIERLALSHFTTEFLLHHNEKEIIHFKSATTISGQENRIKSILGDVFMQSALAIEFSQSGLTLKGYIAEAAYTRSQPDLQYIYVNGRFVRDKLIAQALRQAYHDVLFHGRHPAYVLYLEIDPAFVDINVHPTKHEVRFRDPQWVRDFLIHAVKTALAQAKPGIAHPLPQSTAEYNPITNFAPTPLIEGQGNLSLIQEQPAPYTQTIVHKHPLGHALAQLQGIYILSQNEKGLVIVDMHAAHERILYEKMKKQLAEVGLAMQSLLVPINLSLNPQEITAWQTNKALFARLGFEIESFGPDKIVVRRHPSLLKPKNLENLIRDVLADLITHNTTSRVGERINAALATLACHAALRAPHYLTIEEMEALLREMEKTEHGGLCNHGRPTWKQFDIAELDTFFLRGQ.

The protein belongs to the DNA mismatch repair MutL/HexB family.

Functionally, this protein is involved in the repair of mismatches in DNA. It is required for dam-dependent methyl-directed DNA mismatch repair. May act as a 'molecular matchmaker', a protein that promotes the formation of a stable complex between two or more DNA-binding proteins in an ATP-dependent manner without itself being part of a final effector complex. The chain is DNA mismatch repair protein MutL from Coxiella burnetii (strain Dugway 5J108-111).